The sequence spans 219 residues: MSDKTPTKKGGSHAMTLRERGVTKPPKKSEKLQQYKKAIAAEQTLRTTADVSSLQNPGESAVFQELERLENAVVVLENEQKRLYPILDTPLDNFIVAFVNPTYPMAYFVNTDYKLKLECARIRSDLLYKNKNEVAINRPKISSFKLQLNNVILDTIETIEYDLQNKVLTITAPVQDQELRKSIIYFNILNSDSWEVPKYMKKLFDEMQLEPPVILPLGL.

Positions 1 to 34 (MSDKTPTKKGGSHAMTLRERGVTKPPKKSEKLQQ) are disordered. Residues 16-33 (TLRERGVTKPPKKSEKLQ) are compositionally biased toward basic and acidic residues. Residues 103–134 (YPMAYFVNTDYKLKLECARIRSDLLYKNKNEV) are NEBU-like domain.

As to quaternary structure, interacts with viral envelope protein E18 and the DNA-binding protein p6.9.

It localises to the host cytoplasm. The protein resides in the host nucleus. It is found in the virion. Its function is as follows. Plays an essential role in nucleocapsid entry in host nucleus. May act by binding and stabilizing F-actin in the infected cell, which might attach to nucleocapsids and then push the nucleocapsids into the nucleus. This chain is Protein Ac132 (Ac132), found in Autographa californica nuclear polyhedrosis virus (AcMNPV).